The following is a 367-amino-acid chain: Pepsin A (367 aa).

The propeptide at 1–42 (SIHRVPLKKGKSLRKQLKDHGLLEDFLKKHPYNPASKYHPVL) is activation peptide. The 306-residue stretch at 59-364 (YYGTISIGTP…DRANNKVGLS (306 aa)) folds into the Peptidase A1 domain. The active site involves D77. A disulfide bridge connects residues C90 and C95. N113 is a glycosylation site (N-linked (GlcNAc...) asparagine). C251 and C255 form a disulfide bridge. Residue D260 is part of the active site. The cysteines at positions 290 and 323 are disulfide-linked.

The protein belongs to the peptidase A1 family.

It carries out the reaction Preferential cleavage: hydrophobic, preferably aromatic, residues in P1 and P1' positions. Cleaves 1-Phe-|-Val-2, 4-Gln-|-His-5, 13-Glu-|-Ala-14, 14-Ala-|-Leu-15, 15-Leu-|-Tyr-16, 16-Tyr-|-Leu-17, 23-Gly-|-Phe-24, 24-Phe-|-Phe-25 and 25-Phe-|-Tyr-26 bonds in the B chain of insulin.. Its function is as follows. Shows particularly broad specificity; although bonds involving phenylalanine and leucine are preferred, many others are also cleaved to some extent. The sequence is that of Pepsin A (PGA) from Gallus gallus (Chicken).